We begin with the raw amino-acid sequence, 153 residues long: Insulin-like growth factor 1 (153 aa).

A b region spans residues 49-77 (GPETLCGAELVDALQFVCGDRGFYFNKPT). Disulfide bonds link Cys54-Cys96, Cys66-Cys109, and Cys95-Cys100. Positions 78–89 (GYGSSSRRAPQT) are c. The a stretch occupies residues 90–110 (GIVDECCFRSCDLRRLEMYCA). Positions 111–118 (PLKPAKSA) are d. Residues 119-153 (RSVRAQRHTDMPKAQKEVHLKNASRGSAGNKNYRM) constitute a propeptide, e peptide. Residues 120–153 (SVRAQRHTDMPKAQKEVHLKNASRGSAGNKNYRM) are disordered. The span at 125 to 138 (RHTDMPKAQKEVHL) shows a compositional bias: basic and acidic residues. Residues 142 to 153 (SRGSAGNKNYRM) are compositionally biased toward polar residues.

Belongs to the insulin family. Forms a ternary complex with IGFR1 and ITGAV:ITGB3. Forms a ternary complex with IGFR1 and ITGA6:ITGB4. Forms a ternary complex with IGFBP3 and ALS.

The protein resides in the secreted. Functionally, the insulin-like growth factors, isolated from plasma, are structurally and functionally related to insulin but have a much higher growth-promoting activity. May be a physiological regulator of [1-14C]-2-deoxy-D-glucose (2DG) transport and glycogen synthesis in osteoblasts. Stimulates glucose transport in bone-derived osteoblastic (PyMS) cells and is effective at much lower concentrations than insulin, not only regarding glycogen and DNA synthesis but also with regard to enhancing glucose uptake. May play a role in synapse maturation. Ca(2+)-dependent exocytosis of IGF1 is required for sensory perception of smell in the olfactory bulb. Acts as a ligand for IGF1R. Binds to the alpha subunit of IGF1R, leading to the activation of the intrinsic tyrosine kinase activity which autophosphorylates tyrosine residues in the beta subunit thus initiating a cascade of down-stream signaling events leading to activation of the PI3K-AKT/PKB and the Ras-MAPK pathways. Binds to integrins ITGAV:ITGB3 and ITGA6:ITGB4. Its binding to integrins and subsequent ternary complex formation with integrins and IGFR1 are essential for IGF1 signaling. Induces the phosphorylation and activation of IGFR1, MAPK3/ERK1, MAPK1/ERK2 and AKT1. As part of the MAPK/ERK signaling pathway, acts as a negative regulator of apoptosis in cardiomyocytes via promotion of STUB1/CHIP-mediated ubiquitination and degradation of ICER-type isoforms of CREM. The protein is Insulin-like growth factor 1 of Panthera tigris altaica (Siberian tiger).